Consider the following 55-residue polypeptide: Ferredoxin (55 aa).

4Fe-4S ferredoxin-type domains are found at residues 2–27 and 28–55; these read HIIT…HEGT and GKYE…VKAE. Residues Cys8, Cys11, Cys14, Cys18, Cys37, Cys40, Cys43, and Cys47 each contribute to the [4Fe-4S] cluster site.

[4Fe-4S] cluster serves as cofactor.

Its function is as follows. Ferredoxins are iron-sulfur proteins that transfer electrons in a wide variety of metabolic reactions. This is Ferredoxin from Thermoanaerobacterium thermosaccharolyticum (Clostridium thermosaccharolyticum).